Consider the following 486-residue polypeptide: Protein DETOXIFICATION 27 (486 aa).

The interval 1-25 is disordered; it reads MRGGDGEEGSESRVALLKSPHTAEE. 12 consecutive transmembrane segments (helical) span residues 41–61, 74–94, 124–144, 153–173, 189–209, 216–236, 269–289, 299–319, 349–369, 384–404, 407–427, and 439–461; these read LWQI…MLVI, LAAI…LLLG, IVLF…TPVL, IAEL…AFTL, VTAY…WLFV, VVGT…ILLV, GVML…TGNL, LSIC…FFAG, IIGL…AWIF, LLLA…GVAV, GWQS…GVPL, and VMGI…LSFI.

This sequence belongs to the multi antimicrobial extrusion (MATE) (TC 2.A.66.1) family.

The protein localises to the membrane. This chain is Protein DETOXIFICATION 27, found in Arabidopsis thaliana (Mouse-ear cress).